Here is a 158-residue protein sequence, read N- to C-terminus: Putative 4-hydroxy-4-methyl-2-oxoglutarate aldolase (158 aa).

Substrate is bound by residues 75–78 (GDLI) and R97. Residue D98 participates in a divalent metal cation binding.

This sequence belongs to the class II aldolase/RraA-like family. As to quaternary structure, homotrimer. Requires a divalent metal cation as cofactor.

It carries out the reaction 4-hydroxy-4-methyl-2-oxoglutarate = 2 pyruvate. The catalysed reaction is oxaloacetate + H(+) = pyruvate + CO2. Its function is as follows. Catalyzes the aldol cleavage of 4-hydroxy-4-methyl-2-oxoglutarate (HMG) into 2 molecules of pyruvate. Also contains a secondary oxaloacetate (OAA) decarboxylase activity due to the common pyruvate enolate transition state formed following C-C bond cleavage in the retro-aldol and decarboxylation reactions. The sequence is that of Putative 4-hydroxy-4-methyl-2-oxoglutarate aldolase from Saccharopolyspora erythraea (strain ATCC 11635 / DSM 40517 / JCM 4748 / NBRC 13426 / NCIMB 8594 / NRRL 2338).